We begin with the raw amino-acid sequence, 31 residues long: Protein YmiC (31 aa).

The helical transmembrane segment at 9–29 (WSWMGAFSLSMLFWAELLWII) threads the bilayer.

It localises to the cell inner membrane. This is Protein YmiC from Escherichia coli (strain K12).